The following is a 92-amino-acid chain: MQFSTVASVAFVALANFVAAESAAAISQITDGQIQATTTATTEATTTAAPSSTVETVSPSSTETISQQTENGAAKAAVGMGAGALAAAAMLL.

Positions 1-20 (MQFSTVASVAFVALANFVAA) are cleaved as a signal peptide. The PIR1/2/3 repeat unit spans residues 24–37 (AAISQITDGQIQAT). The interval 41–60 (TTEATTTAAPSSTVETVSPS) is disordered. Residue asparagine 71 is the site of GPI-anchor amidated asparagine attachment. Positions 72–92 (GAAKAAVGMGAGALAAAAMLL) are cleaved as a propeptide — removed in mature form.

The protein belongs to the SRP1/TIP1 family. Extensively O-glycosylated. Post-translationally, the GPI-anchor is attached to the protein in the endoplasmic reticulum and serves to target the protein to the cell surface. There, the glucosamine-inositol phospholipid moiety is cleaved off and the GPI-modified mannoprotein is covalently attached via its lipidless GPI glycan remnant to the 1,6-beta-glucan of the outer cell wall layer. In terms of processing, covalently linked to beta-1,3-glucan of the inner cell wall layer via an alkali-sensitive ester linkage between the gamma-carboxyl group of glutamic acids, arising from a specific glutamine within the PIR1/2/3 repeat, and hydroxyl groups of glucoses of beta-1,3-glucan chains.

The protein resides in the secreted. The protein localises to the cell wall. Its subcellular location is the membrane. Component of the cell wall. The protein is Cell wall protein CWP2 (CWP2) of Saccharomyces cerevisiae (strain ATCC 204508 / S288c) (Baker's yeast).